Here is a 473-residue protein sequence, read N- to C-terminus: TOX high mobility group box family member 2 (473 aa).

4 disordered regions span residues 1 to 42, 139 to 211, 277 to 302, and 340 to 473; these read MSDG…SLLH, GLRS…VSAY, SKSP…PPKQ, and LLPG…PSAR. Residues 8 to 20 show a composition bias toward polar residues; sequence LLSTSQTYNSQGE. The segment at 25 to 63 is required for transcriptional activation; it reads YEIPPITPPNLPEPSLLHLGDHEAGYHSLCHGLAPNGLL. Low complexity predominate over residues 153 to 164; sequence GSKSATPSPSSS. A compositionally biased stretch (basic and acidic residues) spans 171–188; sequence DAHFKISGEKRPSTDPGK. The short motif at 172–201 is the Nuclear localization signal element; sequence AHFKISGEKRPSTDPGKKAKNPKKKKKKDP. The span at 189 to 199 shows a compositional bias: basic residues; the sequence is KAKNPKKKKKK. The segment at residues 204–272 is a DNA-binding region (HMG box); it reads PQKPVSAYAL…EYLKALAAYR (69 aa). Composition is skewed to low complexity over residues 373–382 and 415–440; these read LLSPPLSMSP and SDFP…WDGS. Positions 463 to 473 are enriched in polar residues; it reads SPKNLQEPSAR.

Highly expressed in ovary, where it is restricted to undifferentiated granulosa cells. Expressed in hypothalamus, pituitary gland, testis and uterus.

Its subcellular location is the nucleus. Its function is as follows. Putative transcriptional activator involved in the hypothalamo-pituitary-gonadal system. This Rattus norvegicus (Rat) protein is TOX high mobility group box family member 2 (Tox2).